The following is a 202-amino-acid chain: Nucleoside triphosphate pyrophosphatase (202 aa).

Aspartate 79 serves as the catalytic Proton acceptor.

This sequence belongs to the Maf family. It depends on a divalent metal cation as a cofactor.

It localises to the cytoplasm. The catalysed reaction is a ribonucleoside 5'-triphosphate + H2O = a ribonucleoside 5'-phosphate + diphosphate + H(+). The enzyme catalyses a 2'-deoxyribonucleoside 5'-triphosphate + H2O = a 2'-deoxyribonucleoside 5'-phosphate + diphosphate + H(+). Functionally, nucleoside triphosphate pyrophosphatase. May have a dual role in cell division arrest and in preventing the incorporation of modified nucleotides into cellular nucleic acids. This chain is Nucleoside triphosphate pyrophosphatase, found in Rhodopseudomonas palustris (strain BisB5).